A 225-amino-acid chain; its full sequence is MKKKRKGCFAAAGFMMIFVFVIASFLLVLLFFNRDLIKKLPIDTKTIVLERLTDYKPLVEEELESQGLSNYTSLILGMMYQESKGKGNDPMQSSESLGLKRNEITDPQLSVKQGIKQFTLMYKTGKEKGVDLDTIIQSYNMGAGYIDFVAEHGGTHTEELAKQYSEQQVKKNPDLYTCGGNAKNFRYPYCYGDYTYAEKVKEKTKTVEESLQVATLETMESKAHE.

The helical transmembrane segment at 12-32 (AGFMMIFVFVIASFLLVLLFF) threads the bilayer.

It is found in the cell membrane. This is an uncharacterized protein from Bacillus subtilis (strain 168).